Consider the following 363-residue polypeptide: uncharacterized protein (363 aa).

An N-terminal signal peptide occupies residues 1–20 (MKRAPLITGLLLISTSCAYA).

This sequence belongs to the fimbrial protein family.

It localises to the fimbrium. Its function is as follows. Part of the yraHIJK fimbrial operon. Could contribute to adhesion to various surfaces in specific environmental niches. Increases adhesion to eukaryotic T24 bladder epithelial cells in the absence of fim operon. This is an uncharacterized protein from Escherichia coli (strain K12).